Reading from the N-terminus, the 341-residue chain is Serpentine receptor class beta-3 (341 aa).

Residues 1–23 lie on the Extracellular side of the membrane; the sequence is MLETNDSVCELAYQLAYHPVYRS. Residue Asn-5 is glycosylated (N-linked (GlcNAc...) asparagine). Residues 24–44 form a helical membrane-spanning segment; sequence SQFWSMLVSSLSIPALIYFIT. Topologically, residues 45–58 are cytoplasmic; the sequence is RKIFFLHFHGNLKC. Residues 59–79 traverse the membrane as a helical segment; sequence LLIVYFICNLLFSMALCFAFF. Over 80-103 the chain is Extracellular; sequence YQFLIPFFVTSKCQLLINTTLFKW. Asn-97 is a glycosylation site (N-linked (GlcNAc...) asparagine). Residues 104–124 form a helical membrane-spanning segment; that stretch reads GQICSFLLLTSSMLLPIGFSI. At 125 to 141 the chain is on the cytoplasmic side; sequence ERFVALGNAQKYESSRT. A helical transmembrane segment spans residues 142 to 162; sequence FLGPVIIFIIIAVDFSIIFSV. At 163 to 187 the chain is on the extracellular side; the sequence is YKNEPFTEGFYSFILVPSTTASQIN. The helical transmembrane segment at 188–208 threads the bilayer; the sequence is MYFFVLLFVKIFNLLLNCILL. The Cytoplasmic portion of the chain corresponds to 209 to 237; that stretch reads RIHKKIRIKYYSLSVRYEMEEILQSSKFT. A helical membrane pass occupies residues 238–258; sequence FIIRFTHLLFFGFYVVVILFV. Residues 259–276 are Extracellular-facing; sequence RIMGESFFNGTLNYSVAR. 2 N-linked (GlcNAc...) asparagine glycosylation sites follow: Asn-267 and Asn-271. Residues 277–297 form a helical membrane-spanning segment; that stretch reads GVFCTVPTYNLIIVIIGIKSL. The Cytoplasmic segment spans residues 298–341; sequence RHLNLQRLNKVQSTVQIKSTGKEGSKNYEDIITNYWDSVSSRTP.

Belongs to the nematode receptor-like protein srb family. Expressed throughout the head.

The protein resides in the cell membrane. It is found in the perikaryon. Its subcellular location is the cell projection. It localises to the dendrite. G-protein coupled receptor. This is Serpentine receptor class beta-3 from Caenorhabditis elegans.